Reading from the N-terminus, the 297-residue chain is N-acetylneuraminate lyase (297 aa).

Residues S47 and T48 each coordinate aceneuramate. Y137 acts as the Proton donor in catalysis. Catalysis depends on K165, which acts as the Schiff-base intermediate with substrate. Aceneuramate contacts are provided by T167, G189, D191, E192, and S208.

The protein belongs to the DapA family. NanA subfamily. As to quaternary structure, homotetramer.

The protein resides in the cytoplasm. The catalysed reaction is aceneuramate = aldehydo-N-acetyl-D-mannosamine + pyruvate. It participates in amino-sugar metabolism; N-acetylneuraminate degradation; D-fructose 6-phosphate from N-acetylneuraminate: step 1/5. Its function is as follows. Catalyzes the reversible aldol cleavage of N-acetylneuraminic acid (sialic acid; Neu5Ac) to form pyruvate and N-acetylmannosamine (ManNAc) via a Schiff base intermediate. The chain is N-acetylneuraminate lyase from Enterobacter sp. (strain 638).